The chain runs to 401 residues: Adenosine 3'-phospho 5'-phosphosulfate transporter 2 (401 aa).

N-linked (GlcNAc...) asparagine glycosylation is found at Asn12 and Asn71. Helical transmembrane passes span 78–98 (LTQF…YGYL), 114–134 (YLTL…LQLI), 147–167 (MIIA…LGYL), 170–190 (PTQV…GVFI), 196–216 (NVAD…FTLA), and 223–243 (NFNL…AVIG). N-linked (GlcNAc...) asparagine glycosylation occurs at Asn254. 4 helical membrane-spanning segments follow: residues 267 to 287 (IGFV…PAVT), 298 to 317 (GYAF…VLAL), 324 to 346 (LIAV…IFFA), and 349 to 369 (FTFQ…LNVY).

This sequence belongs to the nucleotide-sugar transporter family. SLC35B subfamily. In terms of tissue distribution, preferentially and highly expressed in colon.

The protein resides in the golgi apparatus membrane. The catalysed reaction is 3'-phosphoadenylyl sulfate(in) + adenosine 3',5'-bisphosphate(out) = 3'-phosphoadenylyl sulfate(out) + adenosine 3',5'-bisphosphate(in). Functionally, probably functions as a 3'-phosphoadenylyl sulfate:adenosine 3',5'-bisphosphate antiporter at the Golgi membranes. Mediates the transport from the cytosol into the lumen of the Golgi of 3'-phosphoadenylyl sulfate/adenosine 3'-phospho 5'-phosphosulfate (PAPS), a universal sulfuryl donor for sulfation events that take place in that compartment. The polypeptide is Adenosine 3'-phospho 5'-phosphosulfate transporter 2 (Homo sapiens (Human)).